Here is a 2200-residue protein sequence, read N- to C-terminus: Tyrosine-protein phosphatase Lar-like (2200 aa).

The signal sequence occupies residues 1-42 (MIQFRNKNNSMNRIARHLRNVARRKGSSLLLFLMLSTVLVAA). N8 and N116 each carry an N-linked (GlcNAc...) asparagine glycan. Residues 43–1497 (KEDDPARLVV…LRGASQKSSP (1455 aa)) lie on the Extracellular side of the membrane. 3 consecutive Ig-like C2-type domains span residues 47–139 (PARL…ASLT), 151–240 (PQIE…KAAN), and 250–334 (PYFS…TTVI). Intrachain disulfides connect C69-C122 and C172-C225. 2 N-linked (GlcNAc...) asparagine glycosylation sites follow: N269 and N315. A disulfide bridge links C272 with C318. Fibronectin type-III domains follow at residues 341 to 434 (PPVN…TKPS), 439 to 535 (APVS…TRQG), 539 to 628 (QPPM…TIAS), 633 to 748 (SPTI…TLED), 752 to 856 (APRN…IPPE), 857 to 956 (APEI…PVGS), 957 to 1053 (PDGE…PDPA), 1058 to 1158 (PPTN…NYMT), and 1181 to 1287 (MVQN…TGPP). N574 carries an N-linked (GlcNAc...) asparagine glycan. N945, N988, N1069, N1141, N1212, and N1330 each carry an N-linked (GlcNAc...) asparagine glycan. Residues 1355–1392 (LARSLSVSPSKKLKRKASEVGDDSQSASYHPKEKRARR) form a disordered region. The chain crosses the membrane as a helical span at residues 1498-1518 (WVGACIAFLVLFSIVGMLICW). Over 1519 to 2200 (WLRCNKKSAG…EYLAAYDNFS (682 aa)) the chain is Cytoplasmic. Tyrosine-protein phosphatase domains are found at residues 1647-1902 (FQSE…VLDA) and 1933-2192 (IDME…AYEY). Residues D1811, 1843-1849 (CSAGIGR), and Q1887 each bind substrate. The active-site Phosphocysteine intermediate is C1843. The active-site Phosphocysteine intermediate is C2133.

The protein belongs to the protein-tyrosine phosphatase family. Receptor class 2A subfamily. In terms of tissue distribution, both isoforms are ubiquitously expressed in early embryos. In later embryos, larvae and adults expression is highest in the nerve ring, dorsal cord, ventral cord and epithelial tissues.

Its subcellular location is the cell junction. It localises to the adherens junction. It is found in the cell membrane. The catalysed reaction is O-phospho-L-tyrosyl-[protein] + H2O = L-tyrosyl-[protein] + phosphate. Functionally, has a role in early neural and epidermal development; neuroblast movements during closure of the gastrulation cleft and epidermal morphogenesis. Vab-1 and ptp-3 may function redundantly within the same sets of neuronal precursors. The protein is Tyrosine-protein phosphatase Lar-like (ptp-3) of Caenorhabditis elegans.